The following is a 370-amino-acid chain: Versatile peroxidase VPS1 (370 aa).

Positions 1–20 (MAFAKLSAFVLALGATVALG) are cleaved as a signal peptide. Residues 21–31 (ESPTHRCLNKR) constitute a propeptide that is removed on maturation. 4 disulfides stabilise this stretch: Cys34/Cys46, Cys45/Cys315, Cys65/Cys151, and Cys279/Cys344. Positions 67 and 71 each coordinate Mn(2+). Catalysis depends on His78, which acts as the Proton acceptor. Ca(2+) contacts are provided by Asp79, Gly97, Asp99, and Ser101. Residue Asn133 is glycosylated (N-linked (GlcNAc...) asparagine). Trp201 (tryptophan radical intermediate) is an active-site residue. His206 is a heme b binding site. Thr207 provides a ligand contact to Ca(2+). 210-214 (AADHV) contributes to the heme b binding site. Residue Asp212 coordinates Mn(2+). Asp224, Thr226, Thr229, and Asp231 together coordinate Ca(2+).

Belongs to the peroxidase family. Ligninase subfamily. Heme b is required as a cofactor. Requires Ca(2+) as cofactor.

Its subcellular location is the secreted. It carries out the reaction 1-(4-hydroxy-3-methoxyphenyl)-2-(2-methoxyphenoxy)propane-1,3-diol + H2O2 = guaiacol + vanillin + glycolaldehyde + H2O. The enzyme catalyses 2 Mn(2+) + H2O2 + 2 H(+) = 2 Mn(3+) + 2 H2O. Functionally, a versatile ligninolytic peroxidase that combines the substrate specificity characteristics of the two other ligninolytic peroxidases, manganese peroxidase and lignin peroxidase. This is Versatile peroxidase VPS1 (vps1) from Pleurotus eryngii (Boletus of the steppes).